We begin with the raw amino-acid sequence, 269 residues long: Leucinostatins biosynthesis cluster protein T (269 aa).

A signal peptide spans 1 to 15 (MHIILTGTGLVGAIA). Asn254 carries N-linked (GlcNAc...) asparagine glycosylation.

Part of the gene cluster that mediates the biosynthesis of the lipopeptide antibiotics leucinostatins that show extensive biological activities, including antimalarial, antiviral, antibacterial, antifungal, and antitumor activities, as well as phytotoxic. The function of lcsT within the leucinostatins biosynthesis has not been identified yet. This is Leucinostatins biosynthesis cluster protein T from Purpureocillium lilacinum (Paecilomyces lilacinus).